Here is a 142-residue protein sequence, read N- to C-terminus: Peptide methionine sulfoxide reductase MsrB (142 aa).

One can recognise a MsrB domain in the interval lysine 3–phenylalanine 126. Residue cysteine 115 is the Nucleophile of the active site.

It belongs to the MsrB Met sulfoxide reductase family.

It carries out the reaction L-methionyl-[protein] + [thioredoxin]-disulfide + H2O = L-methionyl-(R)-S-oxide-[protein] + [thioredoxin]-dithiol. This chain is Peptide methionine sulfoxide reductase MsrB, found in Lactococcus lactis subsp. lactis (strain IL1403) (Streptococcus lactis).